The chain runs to 461 residues: ATP synthase subunit beta 2 (461 aa).

151–158 (GGAGVGKT) contacts ATP.

Belongs to the ATPase alpha/beta chains family. F-type ATPases have 2 components, CF(1) - the catalytic core - and CF(0) - the membrane proton channel. CF(1) has five subunits: alpha(3), beta(3), gamma(1), delta(1), epsilon(1). CF(0) has three main subunits: a(1), b(2) and c(9-12). The alpha and beta chains form an alternating ring which encloses part of the gamma chain. CF(1) is attached to CF(0) by a central stalk formed by the gamma and epsilon chains, while a peripheral stalk is formed by the delta and b chains.

The protein localises to the cell inner membrane. The catalysed reaction is ATP + H2O + 4 H(+)(in) = ADP + phosphate + 5 H(+)(out). In terms of biological role, produces ATP from ADP in the presence of a proton gradient across the membrane. The catalytic sites are hosted primarily by the beta subunits. This chain is ATP synthase subunit beta 2, found in Photobacterium profundum (strain SS9).